The following is a 248-amino-acid chain: UPF0246 protein RC0754 (248 aa).

This sequence belongs to the UPF0246 family.

This is UPF0246 protein RC0754 from Rickettsia conorii (strain ATCC VR-613 / Malish 7).